Here is a 124-residue protein sequence, read N- to C-terminus: Small ribosomal subunit protein uS12 (124 aa).

The interval methionine 1–glycine 32 is disordered. Aspartate 89 is modified (3-methylthioaspartic acid).

Belongs to the universal ribosomal protein uS12 family. As to quaternary structure, part of the 30S ribosomal subunit. Contacts proteins S8 and S17. May interact with IF1 in the 30S initiation complex.

With S4 and S5 plays an important role in translational accuracy. Its function is as follows. Interacts with and stabilizes bases of the 16S rRNA that are involved in tRNA selection in the A site and with the mRNA backbone. Located at the interface of the 30S and 50S subunits, it traverses the body of the 30S subunit contacting proteins on the other side and probably holding the rRNA structure together. The combined cluster of proteins S8, S12 and S17 appears to hold together the shoulder and platform of the 30S subunit. This is Small ribosomal subunit protein uS12 from Nocardioides sp. (strain ATCC BAA-499 / JS614).